Consider the following 20-residue polypeptide: Implantin (20 aa).

The protein belongs to the EF-1-beta/EF-1-delta family. Phosphorylated. As to expression, uterus and embryo.

The protein localises to the cytoplasm. It is found in the nucleus. In terms of biological role, binds DNA. This Mus musculus (Mouse) protein is Implantin.